A 433-amino-acid polypeptide reads, in one-letter code: Gamma-glutamyl phosphate reductase (433 aa).

It belongs to the gamma-glutamyl phosphate reductase family.

The protein localises to the cytoplasm. It carries out the reaction L-glutamate 5-semialdehyde + phosphate + NADP(+) = L-glutamyl 5-phosphate + NADPH + H(+). It functions in the pathway amino-acid biosynthesis; L-proline biosynthesis; L-glutamate 5-semialdehyde from L-glutamate: step 2/2. Functionally, catalyzes the NADPH-dependent reduction of L-glutamate 5-phosphate into L-glutamate 5-semialdehyde and phosphate. The product spontaneously undergoes cyclization to form 1-pyrroline-5-carboxylate. The protein is Gamma-glutamyl phosphate reductase of Rhodopseudomonas palustris (strain BisB18).